Here is a 312-residue protein sequence, read N- to C-terminus: 2,3-dihydroxyphenylpropionate/2,3-dihydroxicinnamic acid 1,2-dioxygenase 1 (312 aa).

H115 serves as the catalytic Proton donor. The active-site Proton acceptor is H179.

Belongs to the LigB/MhpB extradiol dioxygenase family. In terms of assembly, homotetramer. Fe(2+) is required as a cofactor.

The enzyme catalyses 3-(2,3-dihydroxyphenyl)propanoate + O2 = (2Z,4E)-2-hydroxy-6-oxonona-2,4-dienedioate + H(+). It carries out the reaction (2E)-3-(2,3-dihydroxyphenyl)prop-2-enoate + O2 = (2Z,4E,7E)-2-hydroxy-6-oxonona-2,4,7-trienedioate + H(+). It functions in the pathway aromatic compound metabolism; 3-phenylpropanoate degradation. Catalyzes the non-heme iron(II)-dependent oxidative cleavage of 2,3-dihydroxyphenylpropionic acid and 2,3-dihydroxicinnamic acid into 2-hydroxy-6-ketononadienedioate and 2-hydroxy-6-ketononatrienedioate, respectively. This Dechloromonas aromatica (strain RCB) protein is 2,3-dihydroxyphenylpropionate/2,3-dihydroxicinnamic acid 1,2-dioxygenase 1.